A 420-amino-acid chain; its full sequence is Napsin-A (420 aa).

The first 25 residues, 1–25, serve as a signal peptide directing secretion; it reads MSPPPLLQPLLLLLPLLNVEPSGAT. A propeptide spans 26–63 (activation peptide); that stretch reads LIRIPLHRVQPGRRILNLLRGWREPAELPKLGAPSPGD. Residues 78–399 form the Peptidase A1 domain; the sequence is YFGEIGLGTP…MKSSARVGLA (322 aa). A glycan (N-linked (GlcNAc...) asparagine) is linked at N90. The active site involves D96. C109 and C116 are disulfide-bonded. N133 carries N-linked (GlcNAc...) asparagine glycosylation. Cysteines 274 and 278 form a disulfide. The active site involves D283. C317 and C354 form a disulfide bridge. N-linked (GlcNAc...) asparagine glycosylation occurs at N336.

This sequence belongs to the peptidase A1 family. As to expression, expressed predominantly in adult lung (type II pneumocytes) and kidney and in fetal lung. Low levels in adult spleen and very low levels in peripheral blood leukocytes.

It is found in the secreted. In terms of biological role, may be involved in processing of pneumocyte surfactant precursors. The sequence is that of Napsin-A (NAPSA) from Homo sapiens (Human).